The sequence spans 491 residues: Transmembrane protein 39B (491 aa).

Residues Met-1–Leu-56 form a disordered region. N-linked (GlcNAc...) asparagine glycosylation is found at Asn-9, Asn-20, Asn-29, and Asn-45. Polar residues-rich tracts occupy residues Asn-9 to Val-36 and Arg-44 to Leu-56. 8 consecutive transmembrane segments (helical) span residues Leu-79–Ile-99, Thr-115–Ala-135, Leu-152–Gly-172, Thr-185–Phe-205, Glu-290–Val-310, Cys-322–Pro-342, Ile-423–Met-443, and His-449–Leu-469.

Belongs to the TMEM39 family. Expressed in the ovary, followed by the intestine and brain.

It localises to the endoplasmic reticulum membrane. In terms of biological role, may protect the cells against DNA damage caused by exposure to the cold-warming stress and facilitates tissue damage repair during the recovery phase. The polypeptide is Transmembrane protein 39B (Danio rerio (Zebrafish)).